The primary structure comprises 30 residues: Cliotide T20 (30 aa).

The segment at residues 1 to 30 is a cross-link (cyclopeptide (Gly-Asn)); that stretch reads GSAIRCGESCLLGKCYTPGCTCDRPICKKN. Cystine bridges form between C6/C20, C10/C22, and C15/C27.

Post-translationally, contains 3 disulfide bonds. This is a cyclic peptide. In terms of tissue distribution, expressed in root nodules but not in seed.

Functionally, probably participates in a plant defense mechanism. Active against Gram-negative bacterium E.coli ATCC 700926 (MIC=0.5 uM) under low-salt conditions. Not active against Gram-positive bacterium S.aureus ATCC 12600 up to a concentration of 100 uM under low-salt conditions. Exhibits immunomodulatory activity but no cytotoxicity in vitro. The protein is Cliotide T20 of Clitoria ternatea (Butterfly pea).